The sequence spans 145 residues: Large ribosomal subunit protein uL13 (145 aa).

The protein belongs to the universal ribosomal protein uL13 family. Part of the 50S ribosomal subunit.

Its function is as follows. This protein is one of the early assembly proteins of the 50S ribosomal subunit, although it is not seen to bind rRNA by itself. It is important during the early stages of 50S assembly. The chain is Large ribosomal subunit protein uL13 from Staphylococcus carnosus (strain TM300).